The primary structure comprises 74 residues: U-actitoxin-Bgr3a (74 aa).

The N-terminal stretch at 1-21 (MSAQRFLFLLVVTSLIAASLA) is a signal peptide. The propeptide occupies 22 to 29 (APKDVQLT). Disulfide bonds link Cys35–Cys68, Cys37–Cys61, and Cys51–Cys69.

This sequence belongs to the sea anemone type 3 (BDS) potassium channel toxin family.

It is found in the secreted. The protein resides in the nematocyst. In terms of biological role, potently and selectively inhibits voltage-gated potassium channels Kv11/KCNH/ERG. Acts as a gating-modifier toxin that shifts the voltage-dependence of ERG activation in the positive direction and suppresses its current amplitudes elicited by strong depolarizing pulses that maximally activate the channels. The sequence is that of U-actitoxin-Bgr3a from Bunodosoma granuliferum (Red warty sea anemone).